The sequence spans 200 residues: Peptidyl-tRNA hydrolase (200 aa).

Position 15 (Tyr-15) interacts with tRNA. His-20 (proton acceptor) is an active-site residue. Residues Tyr-66, Asn-68, and Asn-114 each coordinate tRNA.

Belongs to the PTH family. As to quaternary structure, monomer.

The protein localises to the cytoplasm. It catalyses the reaction an N-acyl-L-alpha-aminoacyl-tRNA + H2O = an N-acyl-L-amino acid + a tRNA + H(+). Hydrolyzes ribosome-free peptidyl-tRNAs (with 1 or more amino acids incorporated), which drop off the ribosome during protein synthesis, or as a result of ribosome stalling. Functionally, catalyzes the release of premature peptidyl moieties from peptidyl-tRNA molecules trapped in stalled 50S ribosomal subunits, and thus maintains levels of free tRNAs and 50S ribosomes. This Paraburkholderia phytofirmans (strain DSM 17436 / LMG 22146 / PsJN) (Burkholderia phytofirmans) protein is Peptidyl-tRNA hydrolase.